The sequence spans 1522 residues: Lysine-specific demethylase 5B (1522 aa).

The region spanning 10 to 51 is the JmjN domain; it reads CPVFEPSWEEFADPFAFIHKIRPIAEQTGICKVRPPPDWQPP. Positions 75–165 constitute an ARID domain; the sequence is TRVKLNFLDQ…ILYPYNLFQS (91 aa). Residues 180–192 show a composition bias toward basic and acidic residues; sequence DTKDKEYKPHDIP. The interval 180–229 is disordered; it reads DTKDKEYKPHDIPQRQSVQPSESCPPARRAKRLRAEATNIKTESDSPEVR. A PHD-type 1 zinc finger spans residues 284–334; the sequence is LYVCLLCGSGNDEDRLLLCDGCDDSYHTFCLIPPLHDVPKGDWRCPQCLAQ. Tyrosine 400 is a binding site for 2-oxoglutarate. The JmjC domain maps to 428-594; it reads EYLDSGWNLN…LGRQCIEHYR (167 aa). Fe cation is bound by residues histidine 474 and glutamate 476. 2-oxoglutarate contacts are provided by serine 482, asparagine 484, and lysine 492. Position 562 (histidine 562) interacts with Fe cation. A C5HC2 zinc finger spans residues 667–719; it reads CYKCKTTCFMSAVYCPCKPGLLVCLYHVEDLCSCPTYQYKLGYRYTLEELYPM. The segment at 1151–1199 adopts a PHD-type 2 zinc-finger fold; sequence LKVCVCQKEPAAPMIQCELCRGFFHTGCVSVPHALQGPRVWLCPQCRRS. Residues 1353–1365 show a composition bias toward polar residues; sequence LQAEQKPSVGPSN. Disordered stretches follow at residues 1353-1373 and 1400-1460; these read LQAE…CCRG and ARVR…DSED. Positions 1400–1416 are enriched in basic residues; sequence ARVRKMRTPKKKKLKLS. Over residues 1426 to 1442 the composition is skewed to basic and acidic residues; the sequence is RMERERERLLEAQRSSE. A PHD-type 3 zinc finger spans residues 1462–1516; sequence DAICPAVTCLQPEGEEVDWVQCDGSCNQWFHQVCVGISPEMAEKEDYICASCAGK.

The protein belongs to the JARID1 histone demethylase family. Requires Fe(2+) as cofactor.

It localises to the nucleus. It carries out the reaction N(6),N(6),N(6)-trimethyl-L-lysyl(4)-[histone H3] + 3 2-oxoglutarate + 3 O2 = L-lysyl(4)-[histone H3] + 3 formaldehyde + 3 succinate + 3 CO2. Histone demethylase that demethylates 'Lys-4' of histone H3, thereby playing a central role in histone code. Does not demethylate histone H3 'Lys-9' or H3 'Lys-27'. Demethylates trimethylated, dimethylated and monomethylated H3 'Lys-4'. Acts as a transcriptional corepressor. May repress the CLOCK-BMAL1 heterodimer-mediated transcriptional activation of the core clock component PER2. The polypeptide is Lysine-specific demethylase 5B (KDM5B) (Gallus gallus (Chicken)).